The chain runs to 262 residues: Adenosylcobinamide-GDP ribazoletransferase (262 aa).

The next 6 helical transmembrane spans lie at 11 to 31, 43 to 63, 66 to 86, 121 to 141, 146 to 166, and 199 to 219; these read LNLF…SWVI, YFGL…WFTQ, LPTS…TGGF, AIVL…LALF, AITG…SLIF, and IFVL…SLWA.

Belongs to the CobS family. Requires Mg(2+) as cofactor.

It is found in the cell inner membrane. It carries out the reaction alpha-ribazole + adenosylcob(III)inamide-GDP = adenosylcob(III)alamin + GMP + H(+). The enzyme catalyses alpha-ribazole 5'-phosphate + adenosylcob(III)inamide-GDP = adenosylcob(III)alamin 5'-phosphate + GMP + H(+). It functions in the pathway cofactor biosynthesis; adenosylcobalamin biosynthesis; adenosylcobalamin from cob(II)yrinate a,c-diamide: step 7/7. Functionally, joins adenosylcobinamide-GDP and alpha-ribazole to generate adenosylcobalamin (Ado-cobalamin). Also synthesizes adenosylcobalamin 5'-phosphate from adenosylcobinamide-GDP and alpha-ribazole 5'-phosphate. This chain is Adenosylcobinamide-GDP ribazoletransferase, found in Shewanella denitrificans (strain OS217 / ATCC BAA-1090 / DSM 15013).